The chain runs to 635 residues: Probable retaining alpha-galactosidase (635 aa).

An N-terminal signal peptide occupies residues Met1–Ala30. Asp179 is a binding site for Ca(2+). Residue Asp397 is the Nucleophile of the active site. 2 residues coordinate Ca(2+): Glu446 and Glu452. Residue Glu452 is the Proton donor/acceptor of the active site.

This sequence belongs to the glycosyl hydrolase 97 family. It depends on Ca(2+) as a cofactor.

The enzyme catalyses Hydrolysis of terminal, non-reducing alpha-D-galactose residues in alpha-D-galactosides, including galactose oligosaccharides, galactomannans and galactolipids.. In Streptomyces bingchenggensis (strain BCW-1), this protein is Probable retaining alpha-galactosidase.